The following is a 979-amino-acid chain: Pheromone-regulated membrane protein 10 (979 aa).

Disordered stretches follow at residues 1–279 (MGKS…FFSK), 295–318 (LRNVNLHPEADPEKNSVQEAEVDG), 337–411 (YSSL…PQRV), 432–451 (FSTASSIGEEPAKPSKPLLD), and 491–528 (ATKHYPGRKNEEASGSNSELPSFKNTRPKKNKKHLPKF). A compositionally biased stretch (basic and acidic residues) spans 15-26 (GGKDARSPETRS). Positions 29–38 (SRSSTDNRSS) are enriched in low complexity. Positions 54-68 (LDLEEGVDDDADFDW) are enriched in acidic residues. Residues 77-86 (DAQSLDNPFN) show a composition bias toward polar residues. Over residues 105–115 (AIERDAVDTIR) the composition is skewed to basic and acidic residues. A compositionally biased stretch (acidic residues) spans 122 to 135 (EEPDSASDGEDVGM). Composition is skewed to basic and acidic residues over residues 138–148 (EYQRKRERLVD) and 158–175 (SPRRESREGKNVRFHTET). Positions 192–213 (EAGTGTNENGEASSSGMKSSIN) are enriched in polar residues. Over residues 253-263 (GAEKGMKSMKD) the composition is skewed to basic and acidic residues. The span at 360–372 (SPSTPSSSPGPES) shows a compositional bias: low complexity. The segment covering 379–395 (DDYDFDQVDSDGEDSDL) has biased composition (acidic residues). Polar residues predominate over residues 503–515 (ASGSNSELPSFKN). The span at 516 to 528 (TRPKKNKKHLPKF) shows a compositional bias: basic residues. The next 10 helical transmembrane spans lie at 658 to 678 (WVCVLLYGFCSAMVTPYAFGG), 680 to 700 (WVNLAVSFFIGTCVGALQFIV), 710 to 730 (VFEISASIVVSFVGRAFGSIG), 734 to 754 (ICFGAVTQGSLALILPGYIIL), 773 to 793 (FYAIIYSLFLSFGITLGAALF), 809 to 829 (PISPWYRFLFVPAFTIGISLI), 832 to 852 (AHWIQLPVMVTISCTGYVVTY), 864 to 884 (FTASLAAFVIGIMGNLYSRVW), 886 to 906 (GLAVSAMLPAIFVQVPSGVAS), and 946 to 966 (ITMIQVSIGITVGLFGSSLIV).

This sequence belongs to the ThrE exporter (TC 2.A.79) family.

The protein resides in the membrane. This is Pheromone-regulated membrane protein 10 from Zygosaccharomyces rouxii (strain ATCC 2623 / CBS 732 / NBRC 1130 / NCYC 568 / NRRL Y-229).